Reading from the N-terminus, the 145-residue chain is MKINIISVGTLSKEFQVIFDDYIKKINFYSNVNLIKIKEFKSNNKDLIIKNETMAILEKIPKNSKVFLCSLNAEQYSSEKFALFLQEDNISFVIGGSHGVDEKMFKGAWKINFSKMTFPHQLFHLMLIEQIYRGFSILNNKIYHK.

S-adenosyl-L-methionine-binding positions include Leu-68, Gly-95, and Phe-113–Phe-118.

The protein belongs to the RNA methyltransferase RlmH family. In terms of assembly, homodimer.

It is found in the cytoplasm. It catalyses the reaction pseudouridine(1915) in 23S rRNA + S-adenosyl-L-methionine = N(3)-methylpseudouridine(1915) in 23S rRNA + S-adenosyl-L-homocysteine + H(+). In terms of biological role, specifically methylates the pseudouridine at position 1915 (m3Psi1915) in 23S rRNA. The polypeptide is Ribosomal RNA large subunit methyltransferase H (Mycoplasmopsis pulmonis (strain UAB CTIP) (Mycoplasma pulmonis)).